Consider the following 140-residue polypeptide: Large ribosomal subunit protein uL22 (140 aa).

Residues 115 to 140 (AKPAAAKKDPKAAAAKADANAGTKEG) are disordered.

It belongs to the universal ribosomal protein uL22 family. As to quaternary structure, part of the 50S ribosomal subunit.

Functionally, this protein binds specifically to 23S rRNA; its binding is stimulated by other ribosomal proteins, e.g. L4, L17, and L20. It is important during the early stages of 50S assembly. It makes multiple contacts with different domains of the 23S rRNA in the assembled 50S subunit and ribosome. In terms of biological role, the globular domain of the protein is located near the polypeptide exit tunnel on the outside of the subunit, while an extended beta-hairpin is found that lines the wall of the exit tunnel in the center of the 70S ribosome. The chain is Large ribosomal subunit protein uL22 from Heliobacterium modesticaldum (strain ATCC 51547 / Ice1).